A 296-amino-acid polypeptide reads, in one-letter code: MGKGRAPCCDKNKVKRGPWSPQEDLTLITFIQKHGHQNWRSLPKLAGLLRCGKSCRLRWINYLRPDVKRGNFSKKEEDAIIHYHQTLGNKWSKIASFLPGRTDNEIKNVWNTHLKKRLTPSSSSSSLSSTHDQSTKADHDKNCDGAQEEIHSGLNESQNSATSSHHQGECMHTKPELHEVNGLNEIQFLLDHDDFDDITSEFLQDNDILFPLDSLLHNHQTHISTQEMTREVTKSQSFDHPQPDIPCGFEDTNEESDLRRQLVESTTPNNEYDEWFNFIDNQTYFDDFNFVGEVCL.

HTH myb-type domains lie at 11–63 (KNKV…INYL) and 64–118 (RPDV…KKRL). 2 DNA-binding regions (H-T-H motif) span residues 39-63 (WRSLPKLAGLLRCGKSCRLRWINYL) and 91-114 (WSKIASFLPGRTDNEIKNVWNTHL). Residues 118–144 (LTPSSSSSSLSSTHDQSTKADHDKNCD) are disordered. A compositionally biased stretch (basic and acidic residues) spans 133-144 (QSTKADHDKNCD).

As to quaternary structure, interacts with EIL3.

The protein resides in the nucleus. Its function is as follows. Involved in metal ions homeostasis, including iron ions (Fe) acquisition, via the regulation of NAS4 and NAS2 genes expression. Necessary for plant survival in alkaline soil where iron availability is greatly restricted. Involved in the up-regulation of several biosynthesis genes of secondary metabolites involved in iron uptake under conditions of iron deficiency. Triggers tolerance to nickel (Ni) and zinc (Zn) ions. Required in the roots during early signaling steps of rhizobacteria-mediated (e.g. P.fluorescens WCS417r) and beneficial fungi-mediated (e.g. T.asperellum T34) broad-spectrum induced systemic resistance (ISR) against several pathogens (e.g. P.syringae pv tomato, H.parasitica, P.cucumerina, A.brassicicola and B.cinerea) and implying enhanced callose deposition. Required for the induction of some genes (e.g. BGLU42) upon rhizobacteria-mediated ISR. The protein is Transcription factor MYB72 of Arabidopsis thaliana (Mouse-ear cress).